A 411-amino-acid chain; its full sequence is Arginine deiminase (411 aa).

Residue cysteine 401 is the Amidino-cysteine intermediate of the active site.

Belongs to the arginine deiminase family.

It is found in the cytoplasm. It carries out the reaction L-arginine + H2O = L-citrulline + NH4(+). It participates in amino-acid degradation; L-arginine degradation via ADI pathway; carbamoyl phosphate from L-arginine: step 1/2. The protein is Arginine deiminase of Staphylococcus haemolyticus (strain JCSC1435).